Reading from the N-terminus, the 397-residue chain is Autophagy-related protein 29 (397 aa).

The segment at 71–397 is disordered; sequence ATAAVRNSGP…RSRYTSSSNQ (327 aa). Residues 230-240 are compositionally biased toward acidic residues; the sequence is QYEDDDDDESE. Positions 245–259 are enriched in polar residues; it reads PYTSPSSKTSAQDLG. Positions 269–282 are enriched in basic residues; sequence SGKRPHKSHGKPAI. Composition is skewed to basic and acidic residues over residues 300-309 and 330-341; these read KPDKTDRSTE and GGKDKGYSREGS. 2 stretches are compositionally biased toward polar residues: residues 343–363 and 381–397; these read GTPSMGSSYSDLDDASVTQSA and FSISQAFRSRYTSSSNQ.

The protein belongs to the ATG29 family. In terms of assembly, forms a stable complex with ATG17 and ATG31. Interacts directly with ATG31. The ATG17-ATG29-ATG31 complex interacts with the ATG1-ATG13 complex. Note=The interaction with the ATG1-ATG13 complex is induced by starvation.

It localises to the preautophagosomal structure. Plays a role in autophagy. Functions at the preautophagosomal structure (PAS) in order to form normal autophagosomes under starvation conditions. Also plays a role in mitophagy. Autophagy is required for proper vegetative growth, asexual/sexual reproduction, and full virulence. Autophagy is particularly involved in the biosynthesis of deoxynivalenol (DON), an important virulence determinant. The polypeptide is Autophagy-related protein 29 (Gibberella zeae (strain ATCC MYA-4620 / CBS 123657 / FGSC 9075 / NRRL 31084 / PH-1) (Wheat head blight fungus)).